The sequence spans 1591 residues: GATOR1 complex protein DEPDC5 (1591 aa).

Disordered regions lie at residues 427–455 (GKKS…TLPI), 478–532 (LATC…STNI), and 695–720 (LSNS…STSP). Over residues 430–439 (SASEKTKNGR) the composition is skewed to basic and acidic residues. The segment covering 494–508 (SASSCDVSSSPSLPS) has biased composition (low complexity). A Phosphoserine modification is found at Ser505. Polar residues predominate over residues 518 to 532 (SQASDDSSLGKSTNI). Ser992 is modified (phosphoserine). Disordered stretches follow at residues 1040-1064 (SQKS…ENSS) and 1118-1153 (STGQ…SSQQ). Over residues 1118–1149 (STGQPMDRGNNQTFGNSQNIEQAFPSANSGDY) the composition is skewed to polar residues. A DEP domain is found at 1175–1250 (PSTGVQLLSE…YGFYFYKIVM (76 aa)). Ser1518 carries the phosphoserine modification.

It belongs to the IML1 family. Within the GATOR complex, component of the GATOR1 subcomplex, made of DEPDC5, NPRL2 and NPRL3. GATOR1 mediates the strong interaction of the GATOR complex with small GTPases Rag (RagA/RRAGA, RagB/RRAGB, RagC/RRAGC and/or RagD/RRAGD) heterodimers. GATOR1 interacts with GPR155/LYCHOS; interaction takes place in presence of cholesterol and prevents interaction between GATOR1 and KICSTOR. Interacts with SAMTOR; interaction is direct and takes place in presence of methionine, leading to inhibit the activity of the GATOR1 complex. Phosphorylation at Ser-992 and Ser-1518 by AKT1 and PIM1 inhibit the activity of DEPDC5, releasing inhibition of the mTORC1 pathway. In terms of processing, ubiquitinated. Amino acid-induced 'Lys-48'-linked polyubiquitination of DEPDC5 by the BCR(KLHL22) ubiquitin ligase complex leads to DEPDC5 proteasomal degradation and inhibition of the GATOR1 complex. Ubiquitination may occur at multiple lysines. Expressed at low levels in all brain regions. Expressed throughout brain development, including in midgestation embryonic head (11.5 dpc), neonatal brain and whole adult brain. Present in neurons and absent in non-neuronal cells, including astrocytes (at protein level).

The protein localises to the lysosome membrane. It is found in the cytoplasm. Its subcellular location is the cytosol. The protein resides in the perinuclear region. Its function is as follows. As a component of the GATOR1 complex functions as an inhibitor of the amino acid-sensing branch of the mTORC1 pathway. In response to amino acid depletion, the GATOR1 complex has GTPase activating protein (GAP) activity and strongly increases GTP hydrolysis by RagA/RRAGA (or RagB/RRAGB) within heterodimeric Rag complexes, thereby turning them into their inactive GDP-bound form, releasing mTORC1 from lysosomal surface and inhibiting mTORC1 signaling. In the presence of abundant amino acids, the GATOR1 complex is negatively regulated by GATOR2, the other GATOR subcomplex, in this amino acid-sensing branch of the TORC1 pathway. Within the GATOR1 complex, DEPDC5 mediates direct interaction with the nucleotide-binding pocket of small GTPases Rag (RagA/RRAGA, RagB/RRAGB, RagC/RRAGC and/or RagD/RRAGD) and coordinates their nucleotide loading states by promoting RagA/RRAGA or RagB/RRAGB into their GDP-binding state and RagC/RRAGC or RagD/RRAGD into their GTP-binding state. However, it does not execute the GAP activity, which is mediated by NPRL2. This chain is GATOR1 complex protein DEPDC5, found in Mus musculus (Mouse).